We begin with the raw amino-acid sequence, 466 residues long: Cysteine--tRNA ligase (466 aa).

A Zn(2+)-binding site is contributed by C29. Residues 31-41 (ATVQAAPHIGH) carry the 'HIGH' region motif. C208, H233, and E237 together coordinate Zn(2+). The 'KMSKS' region signature appears at 264-268 (KMSKS). K267 provides a ligand contact to ATP.

It belongs to the class-I aminoacyl-tRNA synthetase family. As to quaternary structure, monomer. The cofactor is Zn(2+).

It is found in the cytoplasm. It carries out the reaction tRNA(Cys) + L-cysteine + ATP = L-cysteinyl-tRNA(Cys) + AMP + diphosphate. The polypeptide is Cysteine--tRNA ligase (Streptomyces griseus subsp. griseus (strain JCM 4626 / CBS 651.72 / NBRC 13350 / KCC S-0626 / ISP 5235)).